Consider the following 172-residue polypeptide: Envelope protein UL45 (172 aa).

Residues 1–27 (MPLRASEHAYRPLGPGTPPMRARLPAA) lie on the Intravirion side of the membrane. A helical; Signal-anchor for type II membrane protein membrane pass occupies residues 28 to 48 (AWVGVGTIIGGVVIIAALVLV). The Virion surface segment spans residues 49–172 (PSRASWALSP…TSTRNALGLP (124 aa)).

It belongs to the herpesviridae HHV-1 UL45 family.

Its subcellular location is the virion membrane. In terms of biological role, important virulence factor of HSV neurotropism. Seems to be required for glycoprotein B-induced fusion. Dispensable for growth in vitro. This chain is Envelope protein UL45, found in Human herpesvirus 1 (strain KOS) (HHV-1).